A 278-amino-acid polypeptide reads, in one-letter code: Envelope glycoprotein L (278 aa).

The first 30 residues, 1–30, serve as a signal peptide directing secretion; that stretch reads MCRRPDCGFSFSPGPVILLWCCLLLPIVSS. The gL betaherpesvirus-type domain maps to 43–256; sequence VPAECPELTR…DKYYAGLPPE (214 aa). Cysteine 154 and cysteine 159 form a disulfide bridge.

It belongs to the herpesviridae glycoprotein L (gL) family. Betaherpesvirinae gL subfamily. In terms of assembly, interacts with glycoprotein H (gH); this interaction is necessary for the correct processing and cell surface expression of gH. Forms the envelope pentamer complex (PC) composed of gH, gL, UL128, UL130, and UL131A. The pentamer interacts with host NRP2. Forms the envelope trimer complex composed of gH, gL, and gO. The trimer interacts with host PDGFRA.

It is found in the virion membrane. It localises to the host cell membrane. Its subcellular location is the host Golgi apparatus. The protein localises to the host trans-Golgi network. Functionally, the heterodimer glycoprotein H-glycoprotein L is required for the fusion of viral and plasma membranes leading to virus entry into the host cell. Acts as a functional inhibitor of gH and maintains gH in an inhibited form. Upon binding to host integrins, gL dissociates from gH leading to activation of the viral fusion glycoproteins gB and gH. In human cytomegalovirus, forms two distincts complexes to mediate viral entry, a trimer and a pentamer at the surface of the virion envelope. The gH-gL-gO trimer is required for infection in fibroblasts by interacting with host PDGFRA. The gH-gL-UL128-UL130-UL131A pentamer is essential for viral entry in epithelial, endothelial and myeloid cells via interaction with host NRP2. This Human cytomegalovirus (strain PT) (HHV-5) protein is Envelope glycoprotein L.